The chain runs to 671 residues: MIRRQKNKKFELVSKFQPAGDQEQAIKKLTDGFEQGEKAQILEGATGTGKTFTMANVIAKLNKPTLVISHNKTLVGQLYGEFKEFFPKNAVDYFVSYYDYYQPEAYVPQSDTYIEKDSSINDEIDQLRHKTTSDLMSRNDVIVVASVSCIYGLGDPREYAASVVSLSEGQEISRDVLLRDLVNIQYDRNDIDFQRGRFRVRGDVVEIFPAGYSDHAFRVEFFGDEIDRIVEVDSLTGEVIGEREQVSIFPATHFVTNEQIMERALASIKDEMNIQVKKFEGEGKLLEAQRIKQRTTYDMEMMSEVGYTNGIENYSRHMEGRKAGQPPHTLLDFFPDDFLILIDESHATMPELKAMYNGDRARKQTLIDYGFRLPSALDNRPLKLEEFEKHVNQIMYVSATPGDYELNQTDHKVEQIIRPTGLLDPEIEVRPIKGQIDDLVGEVNKRIERNERVFVTTLTKKMAEDLTDYLKDLGIKVRYLHSDIKTLERLEIIRDLRLGKFDVLIGINLLREGIDVPEVSLVAILDADKEGFLRSTRPLVQTIGRAARNSNGKVIMYADSITDSMREAIDATERRRSLQMKFNKEHGITPKTIVKPIRDVISITKDSEDKENKESFADLNFDELTKKQKQNMIKTLTAQMQEAAKKLDFEEAANLRDAIMDLKKQVHEKKK.

One can recognise a Helicase ATP-binding domain in the interval 31–414 (DGFEQGEKAQ…ELNQTDHKVE (384 aa)). ATP is bound at residue 44-51 (GATGTGKT). The Beta-hairpin motif lies at 97–120 (YYDYYQPEAYVPQSDTYIEKDSSI). The region spanning 435 to 601 (QIDDLVGEVN…TIVKPIRDVI (167 aa)) is the Helicase C-terminal domain. The UVR domain maps to 630–665 (QNMIKTLTAQMQEAAKKLDFEEAANLRDAIMDLKKQ).

The protein belongs to the UvrB family. As to quaternary structure, forms a heterotetramer with UvrA during the search for lesions. Interacts with UvrC in an incision complex.

It is found in the cytoplasm. Functionally, the UvrABC repair system catalyzes the recognition and processing of DNA lesions. A damage recognition complex composed of 2 UvrA and 2 UvrB subunits scans DNA for abnormalities. Upon binding of the UvrA(2)B(2) complex to a putative damaged site, the DNA wraps around one UvrB monomer. DNA wrap is dependent on ATP binding by UvrB and probably causes local melting of the DNA helix, facilitating insertion of UvrB beta-hairpin between the DNA strands. Then UvrB probes one DNA strand for the presence of a lesion. If a lesion is found the UvrA subunits dissociate and the UvrB-DNA preincision complex is formed. This complex is subsequently bound by UvrC and the second UvrB is released. If no lesion is found, the DNA wraps around the other UvrB subunit that will check the other stand for damage. This is UvrABC system protein B from Lactobacillus johnsonii (strain CNCM I-12250 / La1 / NCC 533).